The chain runs to 349 residues: Protein BPS1, chloroplastic (349 aa).

A chloroplast-targeting transit peptide spans 1-43 (MARPQDPPRGFFPFGNPFKNLSSKNSVLSSKLLPLLNNFETNL).

As to expression, expressed in roots, hypocotyls, cotyledons, leaves, flowers and siliques.

The protein resides in the plastid. It is found in the chloroplast. Functionally, required for normal root and shoot development. Prevents constitutive production of a root mobile carotenoid-derived signaling compound that is capable of arresting shoot and leaf development. The protein is Protein BPS1, chloroplastic of Arabidopsis thaliana (Mouse-ear cress).